The sequence spans 439 residues: UDP-N-acetylmuramoylalanine--D-glutamate ligase (439 aa).

Residue 112–118 (GSNGKST) coordinates ATP.

The protein belongs to the MurCDEF family.

The protein localises to the cytoplasm. The catalysed reaction is UDP-N-acetyl-alpha-D-muramoyl-L-alanine + D-glutamate + ATP = UDP-N-acetyl-alpha-D-muramoyl-L-alanyl-D-glutamate + ADP + phosphate + H(+). It participates in cell wall biogenesis; peptidoglycan biosynthesis. Cell wall formation. Catalyzes the addition of glutamate to the nucleotide precursor UDP-N-acetylmuramoyl-L-alanine (UMA). This is UDP-N-acetylmuramoylalanine--D-glutamate ligase from Mannheimia succiniciproducens (strain KCTC 0769BP / MBEL55E).